The sequence spans 362 residues: Heat-inducible transcription repressor HrcA (362 aa).

It belongs to the HrcA family.

Its function is as follows. Negative regulator of class I heat shock genes (grpE-dnaK-dnaJ and groELS operons). Prevents heat-shock induction of these operons. The protein is Heat-inducible transcription repressor HrcA of Rhizobium johnstonii (strain DSM 114642 / LMG 32736 / 3841) (Rhizobium leguminosarum bv. viciae).